A 626-amino-acid chain; its full sequence is Putative ankyrin repeat protein R837 (626 aa).

18 ANK repeats span residues 42-72, 80-109, 110-139, 140-169, 171-199, 201-230, 242-269, 270-298, 299-328, 330-358, 393-416, 417-446, 452-479, 480-509, 510-539, 540-569, 570-599, and 601-626; these read EYFN…GLIR, TLNT…NHRY, SEDK…NIKS, RNNY…DITV, DYEV…DIKK, NKKR…DVYR, KNYK…YQLS, DTNN…LHEL, NLNQ…DINT, GNSC…RLTS, TIMS…KSSL, DYES…ITKQ, INNS…GINI, CINY…NINE, FGDL…NIYI, IKDN…DYHK, KNEL…KTKT, and FFDP…NEIK.

This is Putative ankyrin repeat protein R837 from Acanthamoeba polyphaga (Amoeba).